Here is a 466-residue protein sequence, read N- to C-terminus: Ribulose bisphosphate carboxylase large chain (466 aa).

Position 4 is an N6,N6,N6-trimethyllysine (K4). N113 and T163 together coordinate substrate. Residue K165 is the Proton acceptor of the active site. Residue K167 coordinates substrate. Mg(2+) contacts are provided by K191, D193, and E194. Residue K191 is modified to N6-carboxylysine. The active-site Proton acceptor is H284. R285, H317, and S369 together coordinate substrate.

Belongs to the RuBisCO large chain family. Type I subfamily. Heterohexadecamer of 8 large chains and 8 small chains; disulfide-linked. The disulfide link is formed within the large subunit homodimers. Mg(2+) serves as cofactor. In terms of processing, the disulfide bond which can form in the large chain dimeric partners within the hexadecamer appears to be associated with oxidative stress and protein turnover.

The protein resides in the plastid. It localises to the chloroplast. It catalyses the reaction 2 (2R)-3-phosphoglycerate + 2 H(+) = D-ribulose 1,5-bisphosphate + CO2 + H2O. The enzyme catalyses D-ribulose 1,5-bisphosphate + O2 = 2-phosphoglycolate + (2R)-3-phosphoglycerate + 2 H(+). Functionally, ruBisCO catalyzes two reactions: the carboxylation of D-ribulose 1,5-bisphosphate, the primary event in carbon dioxide fixation, as well as the oxidative fragmentation of the pentose substrate in the photorespiration process. Both reactions occur simultaneously and in competition at the same active site. The sequence is that of Ribulose bisphosphate carboxylase large chain from Justicia odora (Water willow).